Here is a 147-residue protein sequence, read N- to C-terminus: D-aminoacyl-tRNA deacylase (147 aa).

Residues 136–137 carry the Gly-cisPro motif, important for rejection of L-amino acids motif; the sequence is GP.

The protein belongs to the DTD family. Homodimer.

The protein localises to the cytoplasm. The catalysed reaction is glycyl-tRNA(Ala) + H2O = tRNA(Ala) + glycine + H(+). It carries out the reaction a D-aminoacyl-tRNA + H2O = a tRNA + a D-alpha-amino acid + H(+). Its function is as follows. An aminoacyl-tRNA editing enzyme that deacylates mischarged D-aminoacyl-tRNAs. Also deacylates mischarged glycyl-tRNA(Ala), protecting cells against glycine mischarging by AlaRS. Acts via tRNA-based rather than protein-based catalysis; rejects L-amino acids rather than detecting D-amino acids in the active site. By recycling D-aminoacyl-tRNA to D-amino acids and free tRNA molecules, this enzyme counteracts the toxicity associated with the formation of D-aminoacyl-tRNA entities in vivo and helps enforce protein L-homochirality. The polypeptide is D-aminoacyl-tRNA deacylase (Streptococcus equi subsp. zooepidemicus (strain H70)).